The sequence spans 283 residues: Pantothenate synthetase (283 aa).

ATP is bound at residue 30–37 (MGYLHEGH). H37 serves as the catalytic Proton donor. A (R)-pantoate-binding site is contributed by Q61. Q61 lines the beta-alanine pocket. ATP is bound at residue 147–150 (GQKD). Residue Q153 coordinates (R)-pantoate. ATP contacts are provided by residues V176 and 184–187 (MSSR).

This sequence belongs to the pantothenate synthetase family. Homodimer.

The protein localises to the cytoplasm. It catalyses the reaction (R)-pantoate + beta-alanine + ATP = (R)-pantothenate + AMP + diphosphate + H(+). It functions in the pathway cofactor biosynthesis; (R)-pantothenate biosynthesis; (R)-pantothenate from (R)-pantoate and beta-alanine: step 1/1. Its function is as follows. Catalyzes the condensation of pantoate with beta-alanine in an ATP-dependent reaction via a pantoyl-adenylate intermediate. The protein is Pantothenate synthetase of Thermoanaerobacter sp. (strain X514).